A 580-amino-acid polypeptide reads, in one-letter code: MFS-type transporter thnB (580 aa).

The tract at residues 1–33 (MSGDYSATRKSENVDTSTTASQEDSSLAPEQPE) is disordered. Positions 14–25 (VDTSTTASQEDS) are enriched in polar residues. 7 helical membrane-spanning segments follow: residues 60 to 80 (LITLVLAINLAMFLASLDQTI), 92 to 112 (FHGLSQVSWYGSAYFMCLGGF), 125 to 145 (LKISFAIAVFVFELGSLICGV), 157 to 177 (AIAGIGGAGITSGSTVILAFS), 188 to 208 (STMGVTYCIAFILGPLIGGAF), 216 to 236 (WCFYINLPIGGLAMALFFLFF), and 259 to 279 (VGTVLAMGGIISFILALQYAG). Asn285 is a glycosylation site (N-linked (GlcNAc...) asparagine). 7 consecutive transmembrane segments (helical) span residues 286–306 (SSVVIGLLVGFVLIMVTLAAW), 331–351 (IFQFFFVGCYFLLLFYLPIYF), 364–384 (VDNLPLVLSACLFIILGGAAV), 389–409 (MATPYMTAGSAVAAVATGLLY), 421–441 (IGYQVLVGAGLAFPFQNALNI), 457–477 (SLYFFQILGGAFSISAAQAAF), and 529–549 (FAVSVGLVGMAFLSSLHMVMI).

The protein belongs to the major facilitator superfamily.

The protein localises to the membrane. Functionally, MFS-type transporter; part of the gene cluster that produces the tetronate natural products trihazones. In Trichoderma harzianum (Hypocrea lixii), this protein is MFS-type transporter thnB.